A 169-amino-acid polypeptide reads, in one-letter code: Putative antitoxin Rv0268c (169 aa).

Residues 1-11 (MGTRSKSRTRQ) are compositionally biased toward basic residues. Residues 1–35 (MGTRSKSRTRQLKQSNGCTATTSGASDRRRRARRR) are disordered. Residues 120–153 (AAILISAERYESLMEELEDLRDRLSVHEREHVTM) are a coiled coil.

It belongs to the phD/YefM antitoxin family.

Putative antitoxin component of a type II toxin-antitoxin (TA) system; however the expected toxin coding sequence is not found adjacent to this gene. The protein is Putative antitoxin Rv0268c of Mycobacterium tuberculosis (strain ATCC 25618 / H37Rv).